The primary structure comprises 141 residues: Translation initiation factor IF-1, chloroplastic (141 aa).

The transit peptide at 1–46 directs the protein to the chloroplast; that stretch reads MLQLCSTFRPQLLLPCQFRFTNGVLIPQINYVASNSVVNIRPMIRC. The disordered stretch occupies residues 49-69; it reads ASGGRGGANRSKPAKPQVKEG. Positions 63 to 138 constitute an S1-like domain; that stretch reads KPQVKEGSNK…TKGRIIFRMS (76 aa).

This sequence belongs to the IF-1 family. In terms of assembly, component of the 30S ribosomal translation pre-initiation complex which assembles on the 30S ribosome in the order IF-2 and IF-3, IF-1 and N-formylmethionyl-tRNA(fMet); mRNA recruitment can occur at any time during PIC assembly.

It is found in the plastid. It localises to the chloroplast. Functionally, one of the essential components for the initiation of protein synthesis. Stabilizes the binding of IF-2 and IF-3 on the 30S subunit to which N-formylmethionyl-tRNA(fMet) subsequently binds. Helps modulate mRNA selection, yielding the 30S pre-initiation complex (PIC). Upon addition of the 50S ribosomal subunit IF-1, IF-2 and IF-3 are released leaving the mature 70S translation initiation complex. The chain is Translation initiation factor IF-1, chloroplastic from Arabidopsis thaliana (Mouse-ear cress).